The primary structure comprises 450 residues: Phosphoglucosamine mutase (450 aa).

The Phosphoserine intermediate role is filled by serine 102. Residues serine 102, aspartate 244, aspartate 246, and aspartate 248 each coordinate Mg(2+). Phosphoserine is present on serine 102.

It belongs to the phosphohexose mutase family. It depends on Mg(2+) as a cofactor. Activated by phosphorylation.

It carries out the reaction alpha-D-glucosamine 1-phosphate = D-glucosamine 6-phosphate. Catalyzes the conversion of glucosamine-6-phosphate to glucosamine-1-phosphate. This is Phosphoglucosamine mutase from Nitratidesulfovibrio vulgaris (strain ATCC 29579 / DSM 644 / CCUG 34227 / NCIMB 8303 / VKM B-1760 / Hildenborough) (Desulfovibrio vulgaris).